Consider the following 134-residue polypeptide: Holo-[acyl-carrier-protein] synthase (134 aa).

Mg(2+)-binding residues include Asp-8 and Glu-57.

Belongs to the P-Pant transferase superfamily. AcpS family. Requires Mg(2+) as cofactor.

The protein localises to the cytoplasm. It catalyses the reaction apo-[ACP] + CoA = holo-[ACP] + adenosine 3',5'-bisphosphate + H(+). Functionally, transfers the 4'-phosphopantetheine moiety from coenzyme A to a Ser of acyl-carrier-protein. The protein is Holo-[acyl-carrier-protein] synthase of Roseobacter denitrificans (strain ATCC 33942 / OCh 114) (Erythrobacter sp. (strain OCh 114)).